We begin with the raw amino-acid sequence, 210 residues long: Outer-membrane lipoprotein LolB (210 aa).

The signal sequence occupies residues Met-1–Gly-18. The N-palmitoyl cysteine moiety is linked to residue Cys-19. Cys-19 is lipidated: S-diacylglycerol cysteine.

It belongs to the LolB family. As to quaternary structure, monomer.

The protein localises to the cell outer membrane. Functionally, plays a critical role in the incorporation of lipoproteins in the outer membrane after they are released by the LolA protein. This chain is Outer-membrane lipoprotein LolB, found in Glaesserella parasuis serovar 5 (strain SH0165) (Haemophilus parasuis).